The chain runs to 570 residues: Urease subunit alpha (570 aa).

A Urease domain is found at 131–570 (GGMDSHIHFI…LPMAQRYFLF (440 aa)). The Ni(2+) site is built by His-136, His-138, and Lys-219. Residue Lys-219 is modified to N6-carboxylysine. His-221 serves as a coordination point for substrate. Ni(2+) is bound by residues His-248 and His-274. The active-site Proton donor is the His-322. A Ni(2+)-binding site is contributed by Asp-362.

This sequence belongs to the metallo-dependent hydrolases superfamily. Urease alpha subunit family. In terms of assembly, heterotrimer of UreA (gamma), UreB (beta) and UreC (alpha) subunits. Three heterotrimers associate to form the active enzyme. Requires Ni cation as cofactor. Carboxylation allows a single lysine to coordinate two nickel ions.

It is found in the cytoplasm. The catalysed reaction is urea + 2 H2O + H(+) = hydrogencarbonate + 2 NH4(+). It participates in nitrogen metabolism; urea degradation; CO(2) and NH(3) from urea (urease route): step 1/1. The polypeptide is Urease subunit alpha (Sinorhizobium medicae (strain WSM419) (Ensifer medicae)).